The following is a 280-amino-acid chain: Bifunctional protein FolD (280 aa).

Residues 166 to 168 (GRS) and Ser-191 contribute to the NADP(+) site.

The protein belongs to the tetrahydrofolate dehydrogenase/cyclohydrolase family. As to quaternary structure, homodimer.

The enzyme catalyses (6R)-5,10-methylene-5,6,7,8-tetrahydrofolate + NADP(+) = (6R)-5,10-methenyltetrahydrofolate + NADPH. The catalysed reaction is (6R)-5,10-methenyltetrahydrofolate + H2O = (6R)-10-formyltetrahydrofolate + H(+). It functions in the pathway one-carbon metabolism; tetrahydrofolate interconversion. Catalyzes the oxidation of 5,10-methylenetetrahydrofolate to 5,10-methenyltetrahydrofolate and then the hydrolysis of 5,10-methenyltetrahydrofolate to 10-formyltetrahydrofolate. This Marinomonas sp. (strain MWYL1) protein is Bifunctional protein FolD.